Reading from the N-terminus, the 224-residue chain is Large ribosomal subunit protein uL4 (224 aa).

Positions 53-74 (RNRSEVSHSTKKPFKQKGTGNA) are disordered.

This sequence belongs to the universal ribosomal protein uL4 family. Part of the 50S ribosomal subunit.

In terms of biological role, one of the primary rRNA binding proteins, this protein initially binds near the 5'-end of the 23S rRNA. It is important during the early stages of 50S assembly. It makes multiple contacts with different domains of the 23S rRNA in the assembled 50S subunit and ribosome. Its function is as follows. Forms part of the polypeptide exit tunnel. This Chlamydia pneumoniae (Chlamydophila pneumoniae) protein is Large ribosomal subunit protein uL4.